The sequence spans 523 residues: GMP synthase [glutamine-hydrolyzing] (523 aa).

The Glutamine amidotransferase type-1 domain maps to 8–205 (KILILDFGSQ…VVNICGCETK (198 aa)). Residue Cys-85 is the Nucleophile of the active site. Residues His-179 and Glu-181 contribute to the active site. The 193-residue stretch at 206–398 (WTAENIIEDA…LGLPAEMINR (193 aa)) folds into the GMPS ATP-PPase domain. Position 233-239 (233-239 (SGGVDSS)) interacts with ATP.

Homodimer.

It carries out the reaction XMP + L-glutamine + ATP + H2O = GMP + L-glutamate + AMP + diphosphate + 2 H(+). It functions in the pathway purine metabolism; GMP biosynthesis; GMP from XMP (L-Gln route): step 1/1. Its function is as follows. Catalyzes the synthesis of GMP from XMP. This is GMP synthase [glutamine-hydrolyzing] from Haemophilus influenzae (strain PittEE).